We begin with the raw amino-acid sequence, 572 residues long: MERHLITSAIPYINGIKHLGNLVGSQLPADLYARYLRARGHEVLFLCATDEHGTPAELAAAKAGKPVDEYCAEMHAIQSEIAKGFRLSFDHFGRSSSAQNHRLTQHFAGKLDEANLIDEVIEKQVYSHADGRFLPDRYIEGTCPNCAYDKARGDQCENCTKQLDPTDLIEPRSAISGSTDLEVRETKHLYLKQSVLKDQLDAWIDSKTDWPVLTTSIAKKWLHDGDGLRDRGITRDLDWGIPVKKGTQDWPGMEGKVFYVWFDAPIEYIACASEWAEANNLEQSDWERWWRTDKGADDVRYTQFMGKDNVPFHTLSFPATLLGSGEPWKMVDHLKSFNYLNYDGGQFSTSQGRGIFMDQALELLPADYWRWWLLSHAPENSDSEFTWENFQSSVNKDLADVLGNFVSRITKFCAAKFGSEVPAGGAYGSAELELLTKLDESLTRYQDYMGAMEVRKSAQELRAIWASGNEYLQTVAPWSVFKTDPETAAMQTRLGLNLALLFGVLSSPFVPDASEKILKCLGHPSARWPDTCTDFVTSMKPGDPFEVPEVLFAKLTDEDRATYSAKFSGTQS.

The 'HIGH' region motif lies at 11 to 21; that stretch reads PYINGIKHLGN. 4 residues coordinate Zn(2+): C143, C146, C156, and C159. The 'KMSKS' region motif lies at 346 to 350; that stretch reads QFSTS. ATP is bound at residue T349.

It belongs to the class-I aminoacyl-tRNA synthetase family. MetG type 1 subfamily. As to quaternary structure, monomer. Zn(2+) serves as cofactor.

The protein resides in the cytoplasm. It catalyses the reaction tRNA(Met) + L-methionine + ATP = L-methionyl-tRNA(Met) + AMP + diphosphate. Its function is as follows. Is required not only for elongation of protein synthesis but also for the initiation of all mRNA translation through initiator tRNA(fMet) aminoacylation. The polypeptide is Methionine--tRNA ligase (Roseobacter denitrificans (strain ATCC 33942 / OCh 114) (Erythrobacter sp. (strain OCh 114))).